The primary structure comprises 166 residues: MLVIHNRIEPQAEWAAELHLNFEARSKSRLRCFSAENEDVGLFLQRGQSPLRDGEFLKAEDGRVVRVCARPEKLMHVTCSSTFELTRAAYHLGNRHVALQVGDGWLRLLDDYVLKAMLDQLGATVETIEAPFQPEHGAYGGGHHHSRAGEEDFNYPPRMHQFGVRK.

This sequence belongs to the UreE family.

It localises to the cytoplasm. In terms of biological role, involved in urease metallocenter assembly. Binds nickel. Probably functions as a nickel donor during metallocenter assembly. This Pseudomonas savastanoi pv. phaseolicola (strain 1448A / Race 6) (Pseudomonas syringae pv. phaseolicola (strain 1448A / Race 6)) protein is Urease accessory protein UreE.